The chain runs to 185 residues: Elongation factor P (185 aa).

This sequence belongs to the elongation factor P family.

The protein resides in the cytoplasm. The protein operates within protein biosynthesis; polypeptide chain elongation. Involved in peptide bond synthesis. Stimulates efficient translation and peptide-bond synthesis on native or reconstituted 70S ribosomes in vitro. Probably functions indirectly by altering the affinity of the ribosome for aminoacyl-tRNA, thus increasing their reactivity as acceptors for peptidyl transferase. The sequence is that of Elongation factor P from Burkholderia vietnamiensis (strain G4 / LMG 22486) (Burkholderia cepacia (strain R1808)).